A 455-amino-acid polypeptide reads, in one-letter code: Glutamyl-tRNA(Gln) amidotransferase subunit A (455 aa).

Residues K74 and S149 each act as charge relay system in the active site. S173 (acyl-ester intermediate) is an active-site residue.

The protein belongs to the amidase family. GatA subfamily. Heterotrimer of A, B and C subunits.

It carries out the reaction L-glutamyl-tRNA(Gln) + L-glutamine + ATP + H2O = L-glutaminyl-tRNA(Gln) + L-glutamate + ADP + phosphate + H(+). Allows the formation of correctly charged Gln-tRNA(Gln) through the transamidation of misacylated Glu-tRNA(Gln) in organisms which lack glutaminyl-tRNA synthetase. The reaction takes place in the presence of glutamine and ATP through an activated gamma-phospho-Glu-tRNA(Gln). The chain is Glutamyl-tRNA(Gln) amidotransferase subunit A from Methanosphaera stadtmanae (strain ATCC 43021 / DSM 3091 / JCM 11832 / MCB-3).